The sequence spans 325 residues: Glutarate 2-hydroxylase (325 aa).

His-160, Asp-162, and His-292 together coordinate Fe cation.

Belongs to the glutarate hydroxylase family. In terms of assembly, homotetramer. Fe(2+) serves as cofactor.

It catalyses the reaction glutarate + 2-oxoglutarate + O2 = (S)-2-hydroxyglutarate + succinate + CO2. Its pathway is amino-acid degradation. Acts as an alpha-ketoglutarate-dependent dioxygenase catalyzing hydroxylation of glutarate (GA) to L-2-hydroxyglutarate (L2HG). Functions in a L-lysine degradation pathway that proceeds via cadaverine, glutarate and L-2-hydroxyglutarate. This Escherichia coli (strain 55989 / EAEC) protein is Glutarate 2-hydroxylase.